The following is a 118-amino-acid chain: Large ribosomal subunit protein bL20 (118 aa).

The protein belongs to the bacterial ribosomal protein bL20 family.

Its function is as follows. Binds directly to 23S ribosomal RNA and is necessary for the in vitro assembly process of the 50S ribosomal subunit. It is not involved in the protein synthesizing functions of that subunit. The sequence is that of Large ribosomal subunit protein bL20 from Pseudoalteromonas atlantica (strain T6c / ATCC BAA-1087).